A 904-amino-acid chain; its full sequence is Protein translocase subunit SecA (904 aa).

Residues Gln-87, 105–109, and Asp-507 each bind ATP; that span reads GEGKT. Residues 865–887 form a disordered region; sequence GEGAEAAGQQPADAGPKIGRNDP. Residues 868-880 show a composition bias toward low complexity; the sequence is AEAAGQQPADAGP. The Zn(2+) site is built by Cys-888, Cys-890, Cys-899, and His-900.

The protein belongs to the SecA family. In terms of assembly, monomer and homodimer. Part of the essential Sec protein translocation apparatus which comprises SecA, SecYEG and auxiliary proteins SecDF-YajC and YidC. The cofactor is Zn(2+).

The protein localises to the cell inner membrane. It localises to the cytoplasm. The enzyme catalyses ATP + H2O + cellular proteinSide 1 = ADP + phosphate + cellular proteinSide 2.. Part of the Sec protein translocase complex. Interacts with the SecYEG preprotein conducting channel. Has a central role in coupling the hydrolysis of ATP to the transfer of proteins into and across the cell membrane, serving both as a receptor for the preprotein-SecB complex and as an ATP-driven molecular motor driving the stepwise translocation of polypeptide chains across the membrane. This chain is Protein translocase subunit SecA, found in Dechloromonas aromatica (strain RCB).